A 154-amino-acid polypeptide reads, in one-letter code: UPF0225 protein YE2246 (154 aa).

This sequence belongs to the UPF0225 family.

This chain is UPF0225 protein YE2246, found in Yersinia enterocolitica serotype O:8 / biotype 1B (strain NCTC 13174 / 8081).